We begin with the raw amino-acid sequence, 315 residues long: MTIDSGFNHITVLLDEAVEALALRADGCYLDGTFGRGGHSRLILSKLGPQGRLLGFDKDPQAIATGQALAAEDGRFVIVQRSFAELGAEVAGRDLAGKVSGILLDLGVSSPQLDDPERGFSFLNDGPLDMRMNPNQGISAAEFIATAPVEEIARVFKEYGEERFAGRMARAVVERREKQPFTRTADLAEVLKVANPAWEKGKNPATRAFQGLRIHVNNELGDLETGLEAALDALEVGGRLAVISFHSLEDRIVKLFMRKLVKGEADNLPRNLPVQHKTFEPRIKLIGKAQFASEAELKANPRSRSAVMRVAEKLR.

S-adenosyl-L-methionine-binding positions include 37–39 (GGH), Asp-57, Phe-83, Asp-105, and Gln-112.

This sequence belongs to the methyltransferase superfamily. RsmH family.

Its subcellular location is the cytoplasm. It carries out the reaction cytidine(1402) in 16S rRNA + S-adenosyl-L-methionine = N(4)-methylcytidine(1402) in 16S rRNA + S-adenosyl-L-homocysteine + H(+). Its function is as follows. Specifically methylates the N4 position of cytidine in position 1402 (C1402) of 16S rRNA. This chain is Ribosomal RNA small subunit methyltransferase H, found in Pseudomonas entomophila (strain L48).